An 88-amino-acid polypeptide reads, in one-letter code: MISSSHFAIFCIILVSLFALQQYEIGNMEENLNASKIVVYLSPCVRKRCSFSLFKNCHCCRGKYHFCSKNIKVCEKECLRLNPPRPLP.

The N-terminal stretch at 1-23 (MISSSHFAIFCIILVSLFALQQY) is a signal peptide. 4 disulfide bridges follow: C44–C59, C49–C78, C57–C74, and C60–C67.

It belongs to the MEG family. Expressed in stems.

In Arabidopsis thaliana (Mouse-ear cress), this protein is EMBRYO SURROUNDING FACTOR 1-like protein 11 (ESFL11).